Reading from the N-terminus, the 155-residue chain is Ciliary microtubule inner protein 2C (155 aa).

The protein belongs to the CIMIP2 family.

It is found in the cytoplasm. It localises to the cytoskeleton. The protein resides in the cilium axoneme. Microtubule inner protein (MIP) part of the dynein-decorated doublet microtubules (DMTs) in cilia axoneme, which is required for motile cilia beating. The protein is Ciliary microtubule inner protein 2C (cimip2cb) of Xenopus laevis (African clawed frog).